The sequence spans 193 residues: Probable GTP-binding protein EngB (193 aa).

The EngB-type G domain maps to 22–193 (ALPEFALAGR…EAWAALERFL (172 aa)). Residues 30-37 (GRSNVGKS), 57-61 (GKTQT), 75-78 (DVPG), 142-145 (TKAD), and 174-176 (FSA) each bind GTP. Residues Ser37 and Thr59 each contribute to the Mg(2+) site.

This sequence belongs to the TRAFAC class TrmE-Era-EngA-EngB-Septin-like GTPase superfamily. EngB GTPase family. Requires Mg(2+) as cofactor.

Its function is as follows. Necessary for normal cell division and for the maintenance of normal septation. This is Probable GTP-binding protein EngB from Geobacillus sp. (strain WCH70).